The primary structure comprises 429 residues: MENYTVQPAKSVRGEISVPGDKSISHRSIMFGSISSGVTKVTGFLRGEDALATLQAFRAMGVQIDDDGETVTIQGRGLHGLSEPTDVLDCGNSGTSMRLLTGLLAGQNFFSVLSGDKYLRARPMKRVVGPLALMGARISGRAGGEKAPLAIQGSKLIGIEYDSPVSSAQVKSAIMLAGLYAGGETVVREPHLSRDHSERMLRAFGAHVETFPGGVKVRGGAELTGRDIVVPGDISSAAFFLVAALIVPGSDLLIRGVGVNPTRTGIIDVLKGMGGDLELTNQRDESGEPVADIRVRHSKLTAMEICGEVVPRAIDEFPAICVAASLAQGTTVVRDAAELRVKETDRISAMADNLRRAGVNIVETPDGMQITGVASLKGCAADSFGDHRIAMSMMVAGLVAQGETSVSDVECIATSFPGFVNLLDGVVQR.

3-phosphoshikimate is bound by residues Lys22, Ser23, and Arg27. Residue Lys22 participates in phosphoenolpyruvate binding. Residues Gly94 and Arg122 each coordinate phosphoenolpyruvate. Residues Ser167, Gln169, Asp315, and Lys342 each coordinate 3-phosphoshikimate. Gln169 provides a ligand contact to phosphoenolpyruvate. Asp315 (proton acceptor) is an active-site residue. Residues Arg346 and Arg388 each contribute to the phosphoenolpyruvate site.

Belongs to the EPSP synthase family. As to quaternary structure, monomer.

It is found in the cytoplasm. The catalysed reaction is 3-phosphoshikimate + phosphoenolpyruvate = 5-O-(1-carboxyvinyl)-3-phosphoshikimate + phosphate. It functions in the pathway metabolic intermediate biosynthesis; chorismate biosynthesis; chorismate from D-erythrose 4-phosphate and phosphoenolpyruvate: step 6/7. Its function is as follows. Catalyzes the transfer of the enolpyruvyl moiety of phosphoenolpyruvate (PEP) to the 5-hydroxyl of shikimate-3-phosphate (S3P) to produce enolpyruvyl shikimate-3-phosphate and inorganic phosphate. This Geobacter sp. (strain M21) protein is 3-phosphoshikimate 1-carboxyvinyltransferase.